A 1442-amino-acid chain; its full sequence is Trafficking protein particle complex subunit 10 (1442 aa).

Positions 1–23 are enriched in polar residues; it reads MSNVSPNSMNLNGSTSSTASVND. 6 disordered regions span residues 1–86, 251–277, 535–564, 1208–1238, 1316–1335, and 1422–1442; these read MSNV…SSSS, TSSGNNKDKDNDNGGGSSGTGLSTSTK, GSSSSNTPSSTSATTAANGKNTPMPSNSGI, LSSSTSPSSATDSSNSNGNNNNNNNNNNHSK, QQQQKESNNDNGNEKQQKQQ, and LQDNNNNNNNSINSQTSTNKT. Residues 39-86 show a composition bias toward low complexity; it reads SSSSASSISNSNSSSSNNLKPSTQPLSSSSTLNTPTQFSLQHSSSSSS. Residues 535-553 are compositionally biased toward low complexity; it reads GSSSSNTPSSTSATTAANG. The span at 554–564 shows a compositional bias: polar residues; it reads KNTPMPSNSGI. The span at 1208 to 1236 shows a compositional bias: low complexity; the sequence is LSSSTSPSSATDSSNSNGNNNNNNNNNNH. The segment covering 1425 to 1442 has biased composition (low complexity); the sequence is NNNNNNNSINSQTSTNKT.

It belongs to the TMEM1 family. Part of the multisubunit TRAPP (transport protein particle) complex.

Its subcellular location is the golgi apparatus. The protein resides in the cis-Golgi network. Its function is as follows. May play a role in vesicular transport from endoplasmic reticulum to Golgi. The sequence is that of Trafficking protein particle complex subunit 10 (trapcc10-1) from Dictyostelium discoideum (Social amoeba).